Consider the following 471-residue polypeptide: V-type ATP synthase beta chain (471 aa).

Belongs to the ATPase alpha/beta chains family.

Functionally, produces ATP from ADP in the presence of a proton gradient across the membrane. The V-type beta chain is a regulatory subunit. This Streptococcus pyogenes serotype M12 (strain MGAS2096) protein is V-type ATP synthase beta chain.